The chain runs to 1174 residues: K(+) efflux antiporter 2, chloroplastic (1174 aa).

A chloroplast-targeting transit peptide spans 1–57 (MDFASSVQRQSMFHGGADFASYCLPNRMISAKLCPKGLGGTRFWDPMIDSKVRSAIR). The Stromal segment spans residues 58–565 (SKRNVSYRSS…MFPQQEVNEE (508 aa)). The disordered stretch occupies residues 119–141 (GSDDREVTFSKEEKDTREQDSAP). Residues 142-350 (SLEELRDLLN…ALQRAEKTLF (209 aa)) adopt a coiled-coil conformation. Residue lysine 170 is modified to N6-acetyllysine; by NSI. A compositionally biased stretch (basic and acidic residues) spans 420–448 (EAEGEAEKSKNVVLTKKQEVQKDLPRESS). Residues 420–457 (EAEGEAEKSKNVVLTKKQEVQKDLPRESSSHNGTKTSL) are disordered. A helical transmembrane segment spans residues 566–586 (EASLLDVLWLLLASVIFVPLF). Residues 587–592 (QKIPGG) are Chloroplast intermembrane-facing. Residues 593–613 (SPVLGYLAAGILIGPYGLSII) traverse the membrane as a helical segment. Over 614–620 (RNVHGTK) the chain is Stromal. The helical transmembrane segment at 621-641 (AIAEFGVVFLLFNIGLELSVE) threads the bilayer. Residues 642–648 (RLSSMKK) lie on the Chloroplast intermembrane side of the membrane. The chain crosses the membrane as a helical span at residues 649–669 (YVFGLGSAQVLVTAAVIGLIT). Topologically, residues 670 to 678 (HYVAGQAGP) are stromal. The helical transmembrane segment at 679–699 (AAIVIGNGLALSSTAVVLQVL) threads the bilayer. Residues 700-713 (QERGESTSRHGRAT) are Chloroplast intermembrane-facing. The helical transmembrane segment at 714–734 (FSVLLFQDLAVVVLLILIPLI) threads the bilayer. Residues 735–746 (SPNSSKGGIGFQ) lie on the Stromal side of the membrane. Residues 747 to 767 (AIAEALGLAAIKAAVAITGII) traverse the membrane as a helical segment. Topologically, residues 768 to 807 (AGGRLLLRPIYKQIAENRNAEIFSANTLLVILGTSLLTAR) are chloroplast intermembrane. Residues 808–828 (AGLSMALGAFLAGLLLAETEF) traverse the membrane as a helical segment. Residues 829–841 (SLQVESDIAPYRG) lie on the Stromal side of the membrane. A helical transmembrane segment spans residues 842–862 (LLLGLFFMTVGMSIDPKLLLA). At 863 to 865 (NFP) the chain is on the chloroplast intermembrane side. Residues 866-886 (LIMGTLGLLLVGKTILVVIIG) traverse the membrane as a helical segment. Over 887 to 898 (KLFGISIISAVR) the chain is Stromal. The helical transmembrane segment at 899-919 (VGLLLAPGGEFAFVAFGEAVN) threads the bilayer. Over 920-928 (QGIMTPQLS) the chain is Chloroplast intermembrane. A helical transmembrane segment spans residues 929–949 (SLLFLVVGISMALTPWLAAGG). At 950-1174 (QLIASRFELQ…NQIIEGTLAI (225 aa)) the chain is on the stromal side. The RCK N-terminal domain occupies 975–1092 (QGHIIICGFG…EKAGATAVVP (118 aa)). The disordered stretch occupies residues 1141-1174 (SLGYGFSRSTSKPKPPSPSETSDDNQIIEGTLAI).

Belongs to the monovalent cation:proton antiporter 2 (CPA2) transporter (TC 2.A.37) family. KEA (TC 2.A.37.1) subfamily. Post-translationally, acetylated at Lys-170 by the stromal acetyltransferase enzyme NSI. As to expression, detected in leaves, stems and flowers. Expressed in shoots and roots. Mainly localized to leaf veins, hypocotyls, mesophylls and guard cells. Accumulates at high levels in small and dividing plastids (at protein level).

The protein resides in the plastid. It is found in the chloroplast inner membrane. Its subcellular location is the plastid inner membrane. The catalysed reaction is K(+)(in) + H(+)(out) = K(+)(out) + H(+)(in). Repressed by sodium ions Na(+). Its function is as follows. Electroneutral K(+)/H(+) efflux antiporter modulating monovalent cation and pH homeostasis in plastids, especially during plastid division and thylakoid membrane formation. Transports K(+) and Cs(+) preferentially relative to Na(+) or Li(+). May function in osmotic adjustment. Collaboratively with KEA1, adjusts alkaline stromal pH upon light to dark transitions in plastids. Together with KEA1, critical for chloroplast development, including chloroplast RNA-metabolism (e.g. rRNA maturation, polysome loading and RNA-protein interactions) and plastid gene expression (PGE), ion homeostasis, and photosynthesis. Contributes, during early seedling development, to the regulation of photosynthesis and abscisic acid- (ABA-) mediated primary root growth in a sucrose-dependent manner. Involved in the regulation of reactive oxygen and nitrogen species (ROS and RNS) metabolism. Required in roots for rapid hyperosmotic-induced Ca(2+) responses and for osmo-sensory potentiation in hyperosmotic conditions. May counteract resilience to drought and salt stress, involving photorespiratory pathway and stomata closure. This Arabidopsis thaliana (Mouse-ear cress) protein is K(+) efflux antiporter 2, chloroplastic.